We begin with the raw amino-acid sequence, 510 residues long: Maturase K (510 aa).

Belongs to the intron maturase 2 family. MatK subfamily.

The protein resides in the plastid. It localises to the chloroplast. Its function is as follows. Usually encoded in the trnK tRNA gene intron. Probably assists in splicing its own and other chloroplast group II introns. This Gratiola officinalis (Hedgehyssop) protein is Maturase K.